Reading from the N-terminus, the 416-residue chain is Alpha-1,3/1,6-mannosyltransferase ALG2 (416 aa).

Residues 1-84 lie on the Cytoplasmic side of the membrane; that stretch reads MAEEQGRERD…LPRGLGWGGR (84 aa). An intramembrane region (helical) is located at residues 85–105; it reads GAAVCAYVRMVFLALYVLFLA. The Cytoplasmic portion of the chain corresponds to 106-416; sequence DEEFDVVVCD…LYRYVTKLLV (311 aa).

Belongs to the glycosyltransferase group 1 family. Glycosyltransferase 4 subfamily.

It is found in the endoplasmic reticulum membrane. The enzyme catalyses a beta-D-Man-(1-&gt;4)-beta-D-GlcNAc-(1-&gt;4)-alpha-D-GlcNAc-diphospho-di-trans,poly-cis-dolichol + GDP-alpha-D-mannose = an alpha-D-Man-(1-&gt;3)-beta-D-Man-(1-&gt;4)-beta-D-GlcNAc-(1-&gt;4)-alpha-D-GlcNAc-diphospho-di-trans,poly-cis-dolichol + GDP + H(+). It carries out the reaction an alpha-D-Man-(1-&gt;3)-beta-D-Man-(1-&gt;4)-beta-D-GlcNAc-(1-&gt;4)-alpha-D-GlcNAc-diphospho-di-trans,poly-cis-dolichol + GDP-alpha-D-mannose = an alpha-D-Man-(1-&gt;3)-[alpha-D-Man-(1-&gt;6)]-beta-D-Man-(1-&gt;4)-beta-D-GlcNAc-(1-&gt;4)-alpha-D-GlcNAc-diphospho-di-trans,poly-cis-dolichol + GDP + H(+). It catalyses the reaction a beta-D-Man-(1-&gt;4)-beta-D-GlcNAc-(1-&gt;4)-alpha-D-GlcNAc-diphospho-di-trans,poly-cis-dolichol + GDP-alpha-D-mannose = an alpha-D-Man-(1-&gt;6)-beta-D-Man-(1-&gt;4)-beta-D-GlcNAc-(1-&gt;4)-alpha-D-GlcNAc-diphospho-di-trans,poly-cis-dolichol + GDP + H(+). The catalysed reaction is an alpha-D-Man-(1-&gt;6)-beta-D-Man-(1-&gt;4)-beta-D-GlcNAc-(1-&gt;4)-alpha-D-GlcNAc-diphospho-di-trans,poly-cis-dolichol + GDP-alpha-D-mannose = an alpha-D-Man-(1-&gt;3)-[alpha-D-Man-(1-&gt;6)]-beta-D-Man-(1-&gt;4)-beta-D-GlcNAc-(1-&gt;4)-alpha-D-GlcNAc-diphospho-di-trans,poly-cis-dolichol + GDP + H(+). Its pathway is protein modification; protein glycosylation. In terms of biological role, mannosyltransferase that operates in the biosynthetic pathway of dolichol-linked oligosaccharides, the glycan precursors employed in protein asparagine (N)-glycosylation. The assembly of dolichol-linked oligosaccharides begins on the cytosolic side of the endoplasmic reticulum membrane and finishes in its lumen. The sequential addition of sugars to dolichol pyrophosphate produces dolichol-linked oligosaccharides containing fourteen sugars, including two GlcNAcs, nine mannoses and three glucoses. Once assembled, the oligosaccharide is transferred from the lipid to nascent proteins by oligosaccharyltransferases. Catalyzes, on the cytoplasmic face of the endoplasmic reticulum, the addition of the second and third mannose residues to the dolichol-linked oligosaccharide chain, to produce Man3GlcNAc(2)-PP-dolichol core oligosaccharide. Man3GlcNAc(2)-PP-dolichol is a substrate for ALG11, the following enzyme in the biosynthetic pathway. While both alpha 1,3 and alpha 1,6 linkages are possible, the sequential addition of alpha 1,3 followed by alpha 1,6 is probably the preferred route. The protein is Alpha-1,3/1,6-mannosyltransferase ALG2 (ALG2) of Homo sapiens (Human).